We begin with the raw amino-acid sequence, 531 residues long: Maturase K (531 aa).

This sequence belongs to the intron maturase 2 family. MatK subfamily.

Its subcellular location is the plastid. The protein resides in the chloroplast. Usually encoded in the trnK tRNA gene intron. Probably assists in splicing its own and other chloroplast group II introns. This is Maturase K from Ephedra sinica (Chinese ephedra).